The primary structure comprises 179 residues: Interleukin-22b (179 aa).

A signal peptide spans 1 to 33 (MAVLQKSMSFSLMGTLAASCLLLIALWAQEANA). Disulfide bonds link C40–C132 and C89–C178. N54, N68, and N97 each carry an N-linked (GlcNAc...) asparagine glycan.

This sequence belongs to the IL-10 family.

Its subcellular location is the secreted. Its function is as follows. Cytokine that contributes to the inflammatory response in vivo. The chain is Interleukin-22b from Mus musculus (Mouse).